A 152-amino-acid polypeptide reads, in one-letter code: Transcriptional regulator MraZ (152 aa).

SpoVT-AbrB domains follow at residues 5–52 (ASAI…PLDE) and 81–124 (AHEC…DEAA).

Belongs to the MraZ family. As to quaternary structure, forms oligomers.

The protein resides in the cytoplasm. The protein localises to the nucleoid. In Shewanella violacea (strain JCM 10179 / CIP 106290 / LMG 19151 / DSS12), this protein is Transcriptional regulator MraZ.